The sequence spans 1070 residues: 3',5'-cyclic-AMP phosphodiesterase (1070 aa).

4 disordered regions span residues 1-91 (MSQE…KQDS), 166-215 (STSI…TRFQ), 487-516 (VPAS…LSQG), and 615-653 (SAGQ…RLPT). The span at 51 to 69 (KQVQVQSQKFSSTSSTTKV) shows a compositional bias: low complexity. Positions 70-84 (ATHSFSMSSSAGTTG) are enriched in polar residues. The segment covering 166–210 (STSIITSSEQRTSTSTSSSSSTRYIASGSSNLAGGNSNSASSASS) has biased composition (low complexity). Residues 488-506 (PASNKSRRPNQSSSASRSG) are compositionally biased toward polar residues. A PDEase domain is found at 656–985 (VETPRENELG…DYYQSMIPPS (330 aa)). The active-site Proton donor is the His732. 732-736 (HNSLH) lines the 3',5'-cyclic AMP pocket. Residues His736, His772, Asp773, and Asp890 each coordinate a divalent metal cation. Residues Asp773, Asp890, and Gln941 each coordinate 3',5'-cyclic AMP. Over residues 1007 to 1024 (EESDQENLAELEEGDESG) the composition is skewed to acidic residues. A disordered region spans residues 1007 to 1070 (EESDQENLAE…CQNQPQHGGM (64 aa)). Low complexity predominate over residues 1025-1042 (GESTTTGTTGTTAASALS). A compositionally biased stretch (gly residues) spans 1043 to 1054 (GAGGGGGGGGGM). The segment covering 1060–1070 (GCQNQPQHGGM) has biased composition (polar residues).

Belongs to the cyclic nucleotide phosphodiesterase family. PDE4 subfamily. Monomer. A divalent metal cation is required as a cofactor.

It carries out the reaction 3',5'-cyclic AMP + H2O = AMP + H(+). Its pathway is purine metabolism; 3',5'-cyclic AMP degradation; AMP from 3',5'-cyclic AMP: step 1/1. Hydrolyzes the second messenger cAMP, which is a key regulator of many important physiological processes. Vital for female fertility. Required for learning/memory. The chain is 3',5'-cyclic-AMP phosphodiesterase (dnc) from Drosophila melanogaster (Fruit fly).